The following is a 150-amino-acid chain: MAPKAEKKPAEKKPAEEKAGEKAPAAGKKPKAEKRLPASKGEKGGEGKKERGRKKAKKSVETYKIYIFKVLKQVHPDIGISSKAMSIMNSFINDIFEKLAGEAAKLARYNKKPTITSREIQTSVRLVLPGELAKHAVSEGTKAVTKFTSS.

Basic and acidic residues-rich tracts occupy residues 1–21 (MAPK…KAGE) and 33–49 (EKRL…EGKK). A disordered region spans residues 1-58 (MAPKAEKKPAEKKPAEEKAGEKAPAAGKKPKAEKRLPASKGEKGGEGKKERGRKKAKK). Lysine 7 and lysine 34 each carry N6-acetyllysine. Residue lysine 146 forms a Glycyl lysine isopeptide (Lys-Gly) (interchain with G-Cter in ubiquitin) linkage.

This sequence belongs to the histone H2B family. The nucleosome is a histone octamer containing two molecules each of H2A, H2B, H3 and H4 assembled in one H3-H4 heterotetramer and two H2A-H2B heterodimers. The octamer wraps approximately 147 bp of DNA. In terms of processing, can be acetylated to form H2BK6ac and H2BK33ac. Post-translationally, monoubiquitinated by BRE1 to form H2BK143ub1 and deubiquitinated by UBP26. Required for heterochromatic histone H3 di- and trimethylation at H3K4me. May give a specific tag for epigenetic transcriptional activation.

It localises to the nucleus. The protein resides in the chromosome. Core component of nucleosome. Nucleosomes wrap and compact DNA into chromatin, limiting DNA accessibility to the cellular machineries which require DNA as a template. Histones thereby play a central role in transcription regulation, DNA repair, DNA replication and chromosomal stability. DNA accessibility is regulated via a complex set of post-translational modifications of histones, also called histone code, and nucleosome remodeling. The chain is Histone H2B.2 (H2B.2) from Oryza sativa subsp. indica (Rice).